Reading from the N-terminus, the 26-residue chain is Thioredoxin H-type (26 aa).

This sequence belongs to the thioredoxin family. Plant H-type subfamily.

The protein resides in the cytoplasm. Its function is as follows. Participates in various redox reactions through the reversible oxidation of the active center dithiol to a disulfide. The H form is known to activate a number of cytosolic enzymes. In Populus euphratica (Euphrates poplar), this protein is Thioredoxin H-type.